Consider the following 212-residue polypeptide: Probable GTP-binding protein EngB (212 aa).

The EngB-type G domain occupies 38–210 (SLPEIAFVGK…KASLAKCIKP (173 aa)). Residues 46-53 (GKSNVGKS), 73-77 (GRTRQ), 91-94 (DLPG), 158-161 (TKSD), and 189-191 (VSS) each bind GTP. Mg(2+) contacts are provided by S53 and T75.

This sequence belongs to the TRAFAC class TrmE-Era-EngA-EngB-Septin-like GTPase superfamily. EngB GTPase family. Mg(2+) is required as a cofactor.

In terms of biological role, necessary for normal cell division and for the maintenance of normal septation. The protein is Probable GTP-binding protein EngB of Rickettsia felis (strain ATCC VR-1525 / URRWXCal2) (Rickettsia azadi).